The chain runs to 609 residues: Dihydroxy-acid dehydratase (609 aa).

Residue aspartate 81 participates in Mg(2+) binding. Cysteine 122 contacts [2Fe-2S] cluster. Residues aspartate 123 and lysine 124 each contribute to the Mg(2+) site. The residue at position 124 (lysine 124) is an N6-carboxylysine. Cysteine 195 is a [2Fe-2S] cluster binding site. Glutamate 491 provides a ligand contact to Mg(2+). Serine 517 functions as the Proton acceptor in the catalytic mechanism.

The protein belongs to the IlvD/Edd family. As to quaternary structure, homodimer. [2Fe-2S] cluster serves as cofactor. The cofactor is Mg(2+).

It catalyses the reaction (2R)-2,3-dihydroxy-3-methylbutanoate = 3-methyl-2-oxobutanoate + H2O. It carries out the reaction (2R,3R)-2,3-dihydroxy-3-methylpentanoate = (S)-3-methyl-2-oxopentanoate + H2O. It functions in the pathway amino-acid biosynthesis; L-isoleucine biosynthesis; L-isoleucine from 2-oxobutanoate: step 3/4. It participates in amino-acid biosynthesis; L-valine biosynthesis; L-valine from pyruvate: step 3/4. Its function is as follows. Functions in the biosynthesis of branched-chain amino acids. Catalyzes the dehydration of (2R,3R)-2,3-dihydroxy-3-methylpentanoate (2,3-dihydroxy-3-methylvalerate) into 2-oxo-3-methylpentanoate (2-oxo-3-methylvalerate) and of (2R)-2,3-dihydroxy-3-methylbutanoate (2,3-dihydroxyisovalerate) into 2-oxo-3-methylbutanoate (2-oxoisovalerate), the penultimate precursor to L-isoleucine and L-valine, respectively. The protein is Dihydroxy-acid dehydratase of Acinetobacter baumannii (strain AB307-0294).